The chain runs to 127 residues: Ribosome-binding factor A (127 aa).

The protein belongs to the RbfA family. In terms of assembly, monomer. Binds 30S ribosomal subunits, but not 50S ribosomal subunits or 70S ribosomes.

The protein resides in the cytoplasm. In terms of biological role, one of several proteins that assist in the late maturation steps of the functional core of the 30S ribosomal subunit. Associates with free 30S ribosomal subunits (but not with 30S subunits that are part of 70S ribosomes or polysomes). Required for efficient processing of 16S rRNA. May interact with the 5'-terminal helix region of 16S rRNA. The protein is Ribosome-binding factor A of Chloroflexus aurantiacus (strain ATCC 29366 / DSM 635 / J-10-fl).